The chain runs to 520 residues: ATP-dependent clpX-like chaperone, mitochondrial (520 aa).

A mitochondrion-targeting transit peptide spans 1–13 (MLKSASQNFFRAY). 140-147 (GPSGSGKT) contributes to the ATP binding site.

Belongs to the ClpX chaperone family. Homohexamer that forms a ring structure; this hexamerization requires ATP binding. Interacts with HEM1.

It is found in the mitochondrion inner membrane. ATP-dependent unfoldase that stimulates the incorporation of the pyridoxal phosphate cofactor into 5-aminolevulinate synthase (HEM1), thereby activating 5-aminolevulinate (ALA) synthesis, the first step in heme biosynthesis. Up-regulates heme biosynthesis. This chain is ATP-dependent clpX-like chaperone, mitochondrial, found in Saccharomyces cerevisiae (strain ATCC 204508 / S288c) (Baker's yeast).